A 252-amino-acid chain; its full sequence is Triosephosphate isomerase (252 aa).

10 to 12 is a binding site for substrate; it reads NWK. The active-site Electrophile is histidine 96. The active-site Proton acceptor is the glutamate 168. Substrate is bound by residues glycine 174, serine 214, and 235–236; that span reads GG.

It belongs to the triosephosphate isomerase family. In terms of assembly, homodimer.

It localises to the cytoplasm. It carries out the reaction D-glyceraldehyde 3-phosphate = dihydroxyacetone phosphate. Its pathway is carbohydrate biosynthesis; gluconeogenesis. It functions in the pathway carbohydrate degradation; glycolysis; D-glyceraldehyde 3-phosphate from glycerone phosphate: step 1/1. Functionally, involved in the gluconeogenesis. Catalyzes stereospecifically the conversion of dihydroxyacetone phosphate (DHAP) to D-glyceraldehyde-3-phosphate (G3P). In Streptococcus agalactiae serotype Ia (strain ATCC 27591 / A909 / CDC SS700), this protein is Triosephosphate isomerase.